The primary structure comprises 205 residues: Ribosomal RNA small subunit methyltransferase G (205 aa).

S-adenosyl-L-methionine contacts are provided by residues glycine 73, leucine 78, valine 124–glutamate 125, and arginine 139.

It belongs to the methyltransferase superfamily. RNA methyltransferase RsmG family.

It is found in the cytoplasm. The catalysed reaction is guanosine(527) in 16S rRNA + S-adenosyl-L-methionine = N(7)-methylguanosine(527) in 16S rRNA + S-adenosyl-L-homocysteine. Functionally, specifically methylates the N7 position of guanine in position 527 of 16S rRNA. This Methylobacillus flagellatus (strain ATCC 51484 / DSM 6875 / VKM B-1610 / KT) protein is Ribosomal RNA small subunit methyltransferase G.